The sequence spans 410 residues: Mannosyl phosphorylinositol ceramide synthase regulatory protein CSG2 (410 aa).

The first 17 residues, 1-17 (MSTTLLWFSSVIGYVIQ), serve as a signal peptide directing secretion. Residues 18-50 (TKCLSNIQSKKEISVGPNGTIATPETNGDNGNS) lie on the Lumenal side of the membrane. Residues Asn35 and Asn49 are each glycosylated (N-linked (GlcNAc...) asparagine). A helical transmembrane segment spans residues 51-71 (SSLTFYLTFMYFASWLLLVPA). Residues 72-141 (SRLWEKMRPM…SVATFKYVAK (70 aa)) lie on the Cytoplasmic side of the membrane. Residues 142–161 (LTVLALIMIVADLTYNMALS) form a helical membrane-spanning segment. Residues 162–167 (LSPAFD) lie on the Lumenal side of the membrane. Residues 168–187 (VALMQNTAIFEIVTLLYGVC) traverse the membrane as a helical segment. The Cytoplasmic segment spans residues 188–197 (GISRKNYVFR). Residues 198–217 (NFLIMMNAVIGILIISYTKA) form a helical membrane-spanning segment. The Lumenal segment spans residues 218-245 (TCDMLAGKLSVNPNTGELSDPFLFDRLK). A helical membrane pass occupies residues 246–265 (GALICGLGALIMGPFAVLWN). The Cytoplasmic portion of the chain corresponds to 266–285 (RWFCSNISKNENSAVVLVKQ). A helical membrane pass occupies residues 286–305 (STHMALIGIIGMVILLPFIP). The Lumenal portion of the chain corresponds to 306–324 (KFPSRESVESISLFYNDKS). Residues 325–344 (FWFSLLGSIIFGSLPSLISI) form a helical membrane-spanning segment. Residues 345 to 355 (LELNRKAPAEY) lie on the Cytoplasmic side of the membrane. Residues 356–374 (LTTCNLGAIIFMGLAEWVC) traverse the membrane as a helical segment. The Lumenal segment spans residues 375–385 (EPTQTTIVRWE). The chain crosses the membrane as a helical span at residues 386–404 (VIGYIMLTVSLLVLSVTLG). Topologically, residues 405–410 (EGKYHH) are cytoplasmic.

As to quaternary structure, heterodimer of CSH1 and CSG2, and SUR1 and CSG2.

It is found in the endoplasmic reticulum membrane. Required for calcium regulation. May regulate calcium accumulation by a non-vacuole organelle. Also regulates the activity of CSH1 and SUR1 during mannosyl phosphorylinositol ceramide synthesis. This is Mannosyl phosphorylinositol ceramide synthase regulatory protein CSG2 (CSG2) from Saccharomyces cerevisiae (strain ATCC 204508 / S288c) (Baker's yeast).